Reading from the N-terminus, the 92-residue chain is Small ribosomal subunit protein uS17 (92 aa).

The protein belongs to the universal ribosomal protein uS17 family. As to quaternary structure, part of the 30S ribosomal subunit.

In terms of biological role, one of the primary rRNA binding proteins, it binds specifically to the 5'-end of 16S ribosomal RNA. The polypeptide is Small ribosomal subunit protein uS17 (Corynebacterium glutamicum (strain ATCC 13032 / DSM 20300 / JCM 1318 / BCRC 11384 / CCUG 27702 / LMG 3730 / NBRC 12168 / NCIMB 10025 / NRRL B-2784 / 534)).